A 121-amino-acid chain; its full sequence is Large ribosomal subunit protein uL18 (121 aa).

Positions 1-19 (MASKKVQKIRDKRKARVRA) are enriched in basic residues. Residues 1 to 23 (MASKKVQKIRDKRKARVRAKISG) form a disordered region.

Belongs to the universal ribosomal protein uL18 family. In terms of assembly, part of the 50S ribosomal subunit; part of the 5S rRNA/L5/L18/L25 subcomplex. Contacts the 5S and 23S rRNAs.

In terms of biological role, this is one of the proteins that bind and probably mediate the attachment of the 5S RNA into the large ribosomal subunit, where it forms part of the central protuberance. This is Large ribosomal subunit protein uL18 from Syntrophus aciditrophicus (strain SB).